We begin with the raw amino-acid sequence, 192 residues long: RNLGKVIDTLTCGFADLMGYIPLVGAPLGGAARALAHGVRVLEDGVNYATGNLPGCSFSIFLLALLSCLTVPASAYQVRNSSGLYHVTNDCPNSSIVYEAADAILHTPGCVPCVHEGNVSRCWVAMTPTVATRDGKLPTTQLRRHIDLLVGSATLCSALYVGDLCGSVFLVGQLFTFSPRRHWTTQGCNCSI.

The Cytoplasmic segment spans residues 1–52 (RNLGKVIDTLTCGFADLMGYIPLVGAPLGGAARALAHGVRVLEDGVNYATGN). The tract at residues 6–57 (VIDTLTCGFADLMGYIPLVGAPLGGAARALAHGVRVLEDGVNYATGNLPGCS) is interaction with APOA2. The interval 48–51 (YATG) is important for lipid droplets localization. A helical membrane pass occupies residues 53–73 (LPGCSFSIFLLALLSCLTVPA). The propeptide at 62–75 (LLALLSCLTVPASA) is ER anchor for the core protein, removed in mature form by host signal peptidase. At 74-192 (SAYQVRNSSG…WTTQGCNCSI (119 aa)) the chain is on the lumenal side. 3 N-linked (GlcNAc...) asparagine; by host glycosylation sites follow: asparagine 80, asparagine 93, and asparagine 118. The important for fusion stretch occupies residues 149-180 (LVGSATLCSALYVGDLCGSVFLVGQLFTFSPR). Residue asparagine 189 is glycosylated (N-linked (GlcNAc...) asparagine; by host).

This sequence belongs to the hepacivirus polyprotein family. As to quaternary structure, homooligomer. Interacts with E1 (via C-terminus). Interacts with the non-structural protein 5A. Interacts (via N-terminus) with host STAT1 (via SH2 domain); this interaction results in decreased STAT1 phosphorylation and ubiquitin-mediated proteasome-dependent STAT1 degradation, leading to decreased IFN-stimulated gene transcription. Interacts with host STAT3; this interaction constitutively activates STAT3. Interacts with host LTBR receptor. Interacts with host TNFRSF1A receptor and possibly induces apoptosis. Interacts with host HNRPK. Interacts with host YWHAE. Interacts with host UBE3A/E6AP. Interacts with host DDX3X. Interacts with host APOA2. Interacts with host RXRA protein. Interacts with host SP110 isoform 3/Sp110b; this interaction sequesters the transcriptional corepressor SP110 away from the nucleus. Interacts with host CREB3 nuclear transcription protein; this interaction triggers cell transformation. Interacts with host ACY3. Interacts with host C1QR1. Interacts with host RBM24; this interaction, which enhances the interaction of the mature core protein with 5'-UTR, may inhibit viral translation and favor replication. Interacts with host EIF2AK2/PKR; this interaction induces the autophosphorylation of EIF2AK2. Part of the viral assembly initiation complex composed of NS2, E1, E2, NS3, NS4A, NS5A and the mature core protein. In terms of assembly, forms a heterodimer with envelope glycoprotein E2. Interacts with mature core protein. Interacts with protease NS2. The heterodimer E1/E2 interacts with host CLDN1; this interaction plays a role in viral entry into host cell. Interacts with host SPSB2 (via C-terminus). Part of the viral assembly initiation complex composed of NS2, E1, E2, NS3, NS4A, NS5A and the mature core protein. Specific enzymatic cleavages in vivo yield mature proteins. The structural proteins, core, E1, E2 and p7 are produced by proteolytic processing by host signal peptidases. The core protein precursor is synthesized as a 23 kDa, which is retained in the ER membrane through the hydrophobic signal peptide. Cleavage by the signal peptidase releases the 21 kDa mature core protein. The cleavage of the core protein precursor occurs between aminoacids 176 and 188 but the exact cleavage site is not known. Some degraded forms of the core protein appear as well during the course of infection. The other proteins (p7, NS2, NS3, NS4A, NS4B, NS5A and NS5B) are cleaved by the viral proteases. Autoprocessing between NS2 and NS3 is mediated by the NS2 cysteine protease catalytic domain and regulated by the NS3 N-terminal domain. Post-translationally, phosphorylated by host PKC and PKA. In terms of processing, ubiquitinated; mediated by UBE3A and leading to core protein subsequent proteasomal degradation. Highly N-glycosylated.

The protein resides in the host endoplasmic reticulum membrane. It localises to the host mitochondrion membrane. Its subcellular location is the virion. The protein localises to the host cytoplasm. It is found in the host nucleus. The protein resides in the host lipid droplet. It localises to the virion membrane. In terms of biological role, packages viral RNA to form a viral nucleocapsid, and promotes virion budding. Participates in the viral particle production as a result of its interaction with the non-structural protein 5A. Binds RNA and may function as a RNA chaperone to induce the RNA structural rearrangements taking place during virus replication. Modulates viral translation initiation by interacting with viral IRES and 40S ribosomal subunit. Affects various cell signaling pathways, host immunity and lipid metabolism. Prevents the establishment of cellular antiviral state by blocking the interferon-alpha/beta (IFN-alpha/beta) and IFN-gamma signaling pathways and by blocking the formation of phosphorylated STAT1 and promoting ubiquitin-mediated proteasome-dependent degradation of STAT1. Activates STAT3 leading to cellular transformation. Regulates the activity of cellular genes, including c-myc and c-fos. May repress the promoter of p53, and sequester CREB3 and SP110 isoform 3/Sp110b in the cytoplasm. Represses cell cycle negative regulating factor CDKN1A, thereby interrupting an important check point of normal cell cycle regulation. Targets transcription factors involved in the regulation of inflammatory responses and in the immune response: suppresses TNF-induced NF-kappa-B activation, and activates AP-1. Binds to dendritic cells (DCs) via C1QR1, resulting in down-regulation of T-lymphocytes proliferation. Alters lipid metabolism by interacting with hepatocellular proteins involved in lipid accumulation and storage. Induces up-regulation of FAS promoter activity, and thereby contributes to the increased triglyceride accumulation in hepatocytes (steatosis). Forms a heterodimer with envelope glycoprotein E2, which mediates virus attachment to the host cell, virion internalization through clathrin-dependent endocytosis and fusion with host membrane. Fusion with the host cell is most likely mediated by both E1 and E2, through conformational rearrangements of the heterodimer required for fusion rather than a classical class II fusion mechanism. E1/E2 heterodimer binds host apolipoproteins such as APOB and ApoE thereby forming a lipo-viro-particle (LVP). APOE associated to the LVP allows the initial virus attachment to cell surface receptors such as the heparan sulfate proteoglycans (HSPGs), syndecan-1 (SDC1), syndecan-1 (SDC2), the low-density lipoprotein receptor (LDLR) and scavenger receptor class B type I (SCARB1). The cholesterol transfer activity of SCARB1 allows E2 exposure and binding of E2 to SCARB1 and the tetraspanin CD81. E1/E2 heterodimer binding on CD81 activates the epithelial growth factor receptor (EGFR) signaling pathway. Diffusion of the complex E1-E2-EGFR-SCARB1-CD81 to the cell lateral membrane allows further interaction with Claudin 1 (CLDN1) and occludin (OCLN) to finally trigger HCV entry. This is Genome polyprotein from Hepatitis C virus (isolate EC1) (HCV).